The primary structure comprises 114 residues: Large ribosomal subunit protein uL22 (114 aa).

The protein belongs to the universal ribosomal protein uL22 family. Part of the 50S ribosomal subunit.

Its function is as follows. This protein binds specifically to 23S rRNA; its binding is stimulated by other ribosomal proteins, e.g. L4, L17, and L20. It is important during the early stages of 50S assembly. It makes multiple contacts with different domains of the 23S rRNA in the assembled 50S subunit and ribosome. In terms of biological role, the globular domain of the protein is located near the polypeptide exit tunnel on the outside of the subunit, while an extended beta-hairpin is found that lines the wall of the exit tunnel in the center of the 70S ribosome. The sequence is that of Large ribosomal subunit protein uL22 from Desulfosudis oleivorans (strain DSM 6200 / JCM 39069 / Hxd3) (Desulfococcus oleovorans).